The following is a 570-amino-acid chain: 4-coumarate--CoA ligase 4 (570 aa).

ATP is bound by residues Ser-218, Ser-219, Gly-220, Thr-221, Thr-222, and Lys-226. Tyr-268 is a binding site for (E)-4-coumaroyl-AMP. Arg-289 is a binding site for CoA. Residues 291–360 (ELNLVMELIQ…LKFPNAIFGQ (70 aa)) are SBD1. Residues Ala-338, Gln-360, Gly-361, and Thr-365 each contribute to the (E)-4-coumaroyl-AMP site. The ATP site is built by Gln-360, Gly-361, Thr-365, Asp-448, and Arg-463. Residues 361 to 427 (GYGMTESGTV…VRGHQLMKGY (67 aa)) form an SBD2 region. Lys-465 and Lys-469 together coordinate (E)-4-coumaroyl-AMP. CoA is bound by residues Lys-471 and Gly-472. Position 554 (Lys-554) interacts with ATP.

It belongs to the ATP-dependent AMP-binding enzyme family. Mg(2+) serves as cofactor.

It carries out the reaction (E)-sinapate + ATP + CoA = (E)-sinapoyl-CoA + AMP + diphosphate. The enzyme catalyses (E)-4-coumarate + ATP + CoA = (E)-4-coumaroyl-CoA + AMP + diphosphate. It catalyses the reaction (E)-caffeate + ATP + CoA = (E)-caffeoyl-CoA + AMP + diphosphate. The catalysed reaction is (E)-ferulate + ATP + CoA = (E)-feruloyl-CoA + AMP + diphosphate. It carries out the reaction (E)-sinapate + ATP + H(+) = (E)-sinapoyl-AMP + diphosphate. The enzyme catalyses (E)-sinapoyl-AMP + CoA = (E)-sinapoyl-CoA + AMP + H(+). It catalyses the reaction (E)-4-coumarate + ATP + H(+) = (E)-4-coumaroyl-AMP + diphosphate. The catalysed reaction is (E)-4-coumaroyl-AMP + CoA = (E)-4-coumaroyl-CoA + AMP + H(+). It carries out the reaction (E)-caffeate + ATP + H(+) = (E)-caffeoyl-AMP + diphosphate. The enzyme catalyses (E)-caffeoyl-AMP + CoA = (E)-caffeoyl-CoA + AMP + H(+). It catalyses the reaction (E)-ferulate + ATP + H(+) = (E)-feruloyl-AMP + diphosphate. The catalysed reaction is (E)-feruloyl-AMP + CoA = (E)-feruloyl-CoA + AMP + H(+). It participates in phytoalexin biosynthesis; 3,4',5-trihydroxystilbene biosynthesis; 3,4',5-trihydroxystilbene from trans-4-coumarate: step 1/2. Produces CoA thioesters of a variety of hydroxy- and methoxy-substituted cinnamic acids, which are used to synthesize several phenylpropanoid-derived compounds, including anthocyanins, flavonoids, isoflavonoids, coumarins, lignin, suberin and wall-bound phenolics. Follows a two-step reaction mechanism, wherein the carboxylate substrate first undergoes adenylation by ATP, followed by a thioesterification in the presence of CoA to yield the final CoA thioesters. The sequence is that of 4-coumarate--CoA ligase 4 from Arabidopsis thaliana (Mouse-ear cress).